The chain runs to 196 residues: Peptidyl-tRNA hydrolase (196 aa).

A tRNA-binding site is contributed by Tyr18. Residue His23 is the Proton acceptor of the active site. Positions 69, 71, and 117 each coordinate tRNA.

Belongs to the PTH family. In terms of assembly, monomer.

The protein resides in the cytoplasm. The enzyme catalyses an N-acyl-L-alpha-aminoacyl-tRNA + H2O = an N-acyl-L-amino acid + a tRNA + H(+). Its function is as follows. Hydrolyzes ribosome-free peptidyl-tRNAs (with 1 or more amino acids incorporated), which drop off the ribosome during protein synthesis, or as a result of ribosome stalling. In terms of biological role, catalyzes the release of premature peptidyl moieties from peptidyl-tRNA molecules trapped in stalled 50S ribosomal subunits, and thus maintains levels of free tRNAs and 50S ribosomes. This Vibrio cholerae serotype O1 (strain ATCC 39315 / El Tor Inaba N16961) protein is Peptidyl-tRNA hydrolase.